A 214-amino-acid polypeptide reads, in one-letter code: Outer-membrane lipoprotein LolB (214 aa).

Residues methionine 1–glycine 25 form the signal peptide. A lipid anchor (N-palmitoyl cysteine) is attached at cysteine 26. Cysteine 26 carries the S-diacylglycerol cysteine lipid modification.

Belongs to the LolB family. As to quaternary structure, monomer.

It localises to the cell outer membrane. Plays a critical role in the incorporation of lipoproteins in the outer membrane after they are released by the LolA protein. The protein is Outer-membrane lipoprotein LolB of Shewanella sp. (strain MR-7).